Reading from the N-terminus, the 109-residue chain is Phosphoribosyl-ATP pyrophosphatase (109 aa).

This sequence belongs to the PRA-PH family.

It is found in the cytoplasm. It catalyses the reaction 1-(5-phospho-beta-D-ribosyl)-ATP + H2O = 1-(5-phospho-beta-D-ribosyl)-5'-AMP + diphosphate + H(+). The protein operates within amino-acid biosynthesis; L-histidine biosynthesis; L-histidine from 5-phospho-alpha-D-ribose 1-diphosphate: step 2/9. This chain is Phosphoribosyl-ATP pyrophosphatase, found in Azorhizobium caulinodans (strain ATCC 43989 / DSM 5975 / JCM 20966 / LMG 6465 / NBRC 14845 / NCIMB 13405 / ORS 571).